The following is a 197-amino-acid chain: Ribosome biogenesis protein RLP24 (197 aa).

Positions 144–197 (QAERAAAGVDEDAEMGDSDEEMEDASEEESEEEEQQQQKIVLKNKKRSAKKIAF) are disordered. The segment covering 152 to 178 (VDEDAEMGDSDEEMEDASEEESEEEEQ) has biased composition (acidic residues). Over residues 185–197 (LKNKKRSAKKIAF) the composition is skewed to basic residues.

It belongs to the eukaryotic ribosomal protein eL24 family. In terms of assembly, associated with nucleolar and cytoplasmic pre-60S particles. At the end of biogenesis it dissociates from cytoplasmic pre-60S particles and is likely to be exchanged for its ribosomal homolog, RPL24.

It is found in the cytoplasm. The protein resides in the nucleus. In terms of biological role, involved in the biogenesis of the 60S ribosomal subunit. Ensures the docking of NOG1 to pre-60S particles. Activates and recruits ATPase AFG2 to cytoplasmic pre-60S ribosomal particles. The sequence is that of Ribosome biogenesis protein RLP24 (RLP24) from Eremothecium gossypii (strain ATCC 10895 / CBS 109.51 / FGSC 9923 / NRRL Y-1056) (Yeast).